Reading from the N-terminus, the 252-residue chain is Triosephosphate isomerase (252 aa).

9–11 (NWK) is a binding site for substrate. Residue histidine 95 is the Electrophile of the active site. Glutamate 167 serves as the catalytic Proton acceptor. Substrate is bound by residues glycine 173, serine 213, and 234–235 (GG).

It belongs to the triosephosphate isomerase family. In terms of assembly, homodimer.

The protein resides in the cytoplasm. It catalyses the reaction D-glyceraldehyde 3-phosphate = dihydroxyacetone phosphate. It functions in the pathway carbohydrate biosynthesis; gluconeogenesis. Its pathway is carbohydrate degradation; glycolysis; D-glyceraldehyde 3-phosphate from glycerone phosphate: step 1/1. Involved in the gluconeogenesis. Catalyzes stereospecifically the conversion of dihydroxyacetone phosphate (DHAP) to D-glyceraldehyde-3-phosphate (G3P). This Lactiplantibacillus plantarum (strain ATCC BAA-793 / NCIMB 8826 / WCFS1) (Lactobacillus plantarum) protein is Triosephosphate isomerase.